Consider the following 316-residue polypeptide: Probable 5-dehydro-4-deoxyglucarate dehydratase (316 aa).

The protein belongs to the DapA family.

It catalyses the reaction 5-dehydro-4-deoxy-D-glucarate + H(+) = 2,5-dioxopentanoate + CO2 + H2O. It participates in carbohydrate acid metabolism; D-glucarate degradation; 2,5-dioxopentanoate from D-glucarate: step 2/2. This chain is Probable 5-dehydro-4-deoxyglucarate dehydratase, found in Corynebacterium glutamicum (strain R).